The chain runs to 1757 residues: Serine/threonine-protein kinase WNK3 (1757 aa).

A disordered region spans residues 1–25 (MATDSGEPASTEDSEKPDGVSFENR). Residue S62 is modified to Phosphoserine. The segment covering 66–82 (TEDDKVAESSRRDERKA) has biased composition (basic and acidic residues). The segment at 66–85 (TEDDKVAESSRRDERKAATN) is disordered. The 259-residue stretch at 146-404 (LKFDIELGRG…IKDLLNHAFF (259 aa)) folds into the Protein kinase domain. ATP-binding positions include 226–229 (TELM) and K276. D293 functions as the Proton acceptor in the catalytic mechanism. Phosphoserine; by autocatalysis occurs at positions 303 and 307. The tract at residues 536–546 (EYEETEVDQHV) is interaction with KLHL3. T540 carries the phosphothreonine modification. Composition is skewed to polar residues over residues 551-570 (LQGK…SSEP), 578-604 (SDTS…KLTQ), and 674-689 (SVKE…SGNG). 2 disordered regions span residues 551–604 (LQGK…KLTQ) and 674–705 (SVKE…PRPE). S1039 is subject to Phosphoserine. The span at 1404–1422 (VATEKNVTSTTEVSVQSGS) shows a compositional bias: polar residues. 3 disordered regions span residues 1404-1440 (VATE…QTCT), 1479-1498 (SLFY…EIED), and 1536-1574 (ATKD…MTHS). Over residues 1479 to 1491 (SLFYSPSSPMSSD) the composition is skewed to low complexity. Residues S1550 and S1553 each carry the phosphoserine modification. Positions 1555 to 1566 (RRPRSFKSKLRS) are enriched in basic residues. S1595 carries the phosphoserine modification. Disordered regions lie at residues 1621–1650 (HFPS…CEST) and 1734–1757 (PGMN…PGPK). Residues 1624–1637 (SKPSLNQLKQSQQK) show a composition bias toward low complexity. The segment covering 1641 to 1650 (ENWNKSCEST) has biased composition (polar residues). Pro residues predominate over residues 1742–1757 (PAPPVQNPASIPPGPK).

It belongs to the protein kinase superfamily. Ser/Thr protein kinase family. WNK subfamily. As to quaternary structure, interacts with WNK1 and WNK4. Mg(2+) is required as a cofactor. In terms of processing, autophosphorylated at Ser-303 and Ser-307, promoting its activity. Phosphorylation at Thr-540 prevents interaction with KLHL3 and subsequent ubiquitination and degradation by the BCR(KLHL3) complex. Post-translationally, ubiquitinated by the BCR(KLHL2) complex, leading to its degradation. Ubiquitinated by the BCR(KLHL3) complex, leading to its degradation. Expressed in pancreatic duct.

The protein resides in the cytoplasm. The catalysed reaction is L-seryl-[protein] + ATP = O-phospho-L-seryl-[protein] + ADP + H(+). It carries out the reaction L-threonyl-[protein] + ATP = O-phospho-L-threonyl-[protein] + ADP + H(+). With respect to regulation, activated in response to hyperosmotic stress: cell shrinkage promotes formation of a membraneless compartment that concentrates WNK3 with its substrates, OXSR1/OSR1 and STK39/SPAK. Activation requires autophosphorylation of Ser-307 and, to a lower extent, Ser-303. Autophosphorylation and subsequent activation is inhibited by increases in intracellular ionic strength: Cl(-) potently inhibits WNK3 kinase activity via direct binding. Also inhibited by K(+) ions. Kinase activity is inhibited by WNK4. Serine/threonine-protein kinase component of the WNK3-SPAK/OSR1 kinase cascade, which plays an important role in the regulation of electrolyte homeostasis and regulatory volume increase in response to hyperosmotic stress. WNK3 mediates regulatory volume increase in response to hyperosmotic stress by acting as a molecular crowding sensor, which senses cell shrinkage and mediates formation of a membraneless compartment by undergoing liquid-liquid phase separation. The membraneless compartment concentrates WNK3 with its substrates, OXSR1/OSR1 and STK39/SPAK, promoting WNK3-dependent phosphorylation and activation of downstream kinases OXSR1/OSR1 and STK39/SPAK. Following activation, OXSR1/OSR1 and STK39/SPAK catalyze phosphorylation of ion cotransporters SLC12A1/NKCC2, SLC12A2/NKCC1, SLC12A3/NCC, SLC12A4/KCC1, SLC12A5/KCC2 or SLC12A6/KCC3, regulating their activity. Phosphorylation of Na-K-Cl cotransporters SLC12A2/NKCC1 and SLC12A2/NKCC1 promote their activation and ion influx; simultaneously, phosphorylation of K-Cl cotransporters SLC12A4/KCC1, SLC12A5/KCC2 and SLC12A6/KCC3 inhibits its activity, blocking ion efflux. Phosphorylates WNK4, possibly regulating the activity of SLC12A3/NCC. May also phosphorylate NEDD4L. Also acts as a scaffold protein independently of its protein kinase activity: negatively regulates cell membrane localization of various transporters and channels, such as KCNJ1 and SLC26A9. Increases Ca(2+) influx mediated by TRPV5 and TRPV6 by enhancing their membrane expression level via a kinase-dependent pathway. The protein is Serine/threonine-protein kinase WNK3 of Mus musculus (Mouse).